Here is a 208-residue protein sequence, read N- to C-terminus: Protein-L-isoaspartate O-methyltransferase (208 aa).

S59 is a catalytic residue.

This sequence belongs to the methyltransferase superfamily. L-isoaspartyl/D-aspartyl protein methyltransferase family.

It localises to the cytoplasm. The enzyme catalyses [protein]-L-isoaspartate + S-adenosyl-L-methionine = [protein]-L-isoaspartate alpha-methyl ester + S-adenosyl-L-homocysteine. In terms of biological role, catalyzes the methyl esterification of L-isoaspartyl residues in peptides and proteins that result from spontaneous decomposition of normal L-aspartyl and L-asparaginyl residues. It plays a role in the repair and/or degradation of damaged proteins. The protein is Protein-L-isoaspartate O-methyltransferase of Vibrio parahaemolyticus serotype O3:K6 (strain RIMD 2210633).